A 443-amino-acid chain; its full sequence is Structure-specific endonuclease subunit SLX1 homolog (443 aa).

The interval 1–27 (METFILSSDSDDDSGPPPSKRRTIEGI) is disordered. The GIY-YIG domain occupies 171-258 (EFYGVYCLIS…PLVSKSLKEK (88 aa)). An SLX1-type zinc finger spans residues 340 to 395 (CRICGKDIEKLWSLVRCISATCPSHFHSKCLSENGLKLKNEHVDHVYPLKANCPTC).

Belongs to the SLX1 family. Forms a heterodimer with him-18/slx-4. Requires a divalent metal cation as cofactor.

It is found in the nucleus. Catalytic subunit of a heterodimeric structure-specific endonuclease that resolves DNA secondary structures generated during DNA repair and recombination. Has endonuclease activity towards branched DNA substrates, introducing single-strand cuts in duplex DNA close to junctions with ss-DNA (Potential). Has a preference for replication forks over 5' flap structures or Holliday junctions and shows much lower activity toward 3' flap structures. Required for proper crossover distribution through inhibition of crossover formation at the central region of chromosomes. The polypeptide is Structure-specific endonuclease subunit SLX1 homolog (Caenorhabditis elegans).